Here is a 333-residue protein sequence, read N- to C-terminus: Ketol-acid reductoisomerase (NADP(+)) (333 aa).

Residues 2–182 form the KARI N-terminal Rossmann domain; sequence AKIYYDEDAS…GATRAGVIET (181 aa). NADP(+) contacts are provided by residues 25-28, serine 51, serine 53, and 83-86; these read YGSQ and DTVQ. The active site involves histidine 108. An NADP(+)-binding site is contributed by glycine 134. In terms of domain architecture, KARI C-terminal knotted spans 183-327; the sequence is TFKEETETDL…EELRKMMPWL (145 aa). Positions 191, 195, 227, and 231 each coordinate Mg(2+). Serine 252 provides a ligand contact to substrate.

Belongs to the ketol-acid reductoisomerase family. Mg(2+) is required as a cofactor.

It carries out the reaction (2R)-2,3-dihydroxy-3-methylbutanoate + NADP(+) = (2S)-2-acetolactate + NADPH + H(+). The enzyme catalyses (2R,3R)-2,3-dihydroxy-3-methylpentanoate + NADP(+) = (S)-2-ethyl-2-hydroxy-3-oxobutanoate + NADPH + H(+). It participates in amino-acid biosynthesis; L-isoleucine biosynthesis; L-isoleucine from 2-oxobutanoate: step 2/4. The protein operates within amino-acid biosynthesis; L-valine biosynthesis; L-valine from pyruvate: step 2/4. Involved in the biosynthesis of branched-chain amino acids (BCAA). Catalyzes an alkyl-migration followed by a ketol-acid reduction of (S)-2-acetolactate (S2AL) to yield (R)-2,3-dihydroxy-isovalerate. In the isomerase reaction, S2AL is rearranged via a Mg-dependent methyl migration to produce 3-hydroxy-3-methyl-2-ketobutyrate (HMKB). In the reductase reaction, this 2-ketoacid undergoes a metal-dependent reduction by NADPH to yield (R)-2,3-dihydroxy-isovalerate. This Aquifex aeolicus (strain VF5) protein is Ketol-acid reductoisomerase (NADP(+)).